The chain runs to 337 residues: Nucleoid-associated protein HSM_0096 (337 aa).

This sequence belongs to the YejK family.

The protein localises to the cytoplasm. It is found in the nucleoid. This is Nucleoid-associated protein HSM_0096 from Histophilus somni (strain 2336) (Haemophilus somnus).